Here is an 82-residue protein sequence, read N- to C-terminus: Putative membrane protein insertion efficiency factor (82 aa).

This sequence belongs to the UPF0161 family.

It localises to the cell inner membrane. In terms of biological role, could be involved in insertion of integral membrane proteins into the membrane. This chain is Putative membrane protein insertion efficiency factor, found in Aeromonas salmonicida (strain A449).